An 839-amino-acid polypeptide reads, in one-letter code: Elongation factor 2 (839 aa).

The tr-type G domain occupies 17 to 248; sequence ENIRNMSVIA…MGRLWGDSYF (232 aa). GTP is bound by residues 26–33, 156–159, and 211–213; these read AHVDHGKT, NKVD, and SGL. His698 bears the Diphthamide mark.

It belongs to the TRAFAC class translation factor GTPase superfamily. Classic translation factor GTPase family. EF-G/EF-2 subfamily. In terms of processing, phosphorylation by EF-2 kinase completely inactivates EF-2.

It is found in the cytoplasm. It catalyses the reaction GTP + H2O = GDP + phosphate + H(+). Catalyzes the GTP-dependent ribosomal translocation step during translation elongation. During this step, the ribosome changes from the pre-translocational (PRE) to the post-translocational (POST) state as the newly formed A-site-bound peptidyl-tRNA and P-site-bound deacylated tRNA move to the P and E sites, respectively. Catalyzes the coordinated movement of the two tRNA molecules, the mRNA and conformational changes in the ribosome. This Dictyostelium discoideum (Social amoeba) protein is Elongation factor 2 (efbA).